Reading from the N-terminus, the 394-residue chain is Tyrosine--tRNA ligase, cytoplasmic (394 aa).

At S2 the chain carries N-acetylserine. Y43 serves as a coordination point for L-tyrosine. Residues 48-56 (PTGRPHCGY) carry the 'HIGH' region motif. 4 residues coordinate L-tyrosine: Y170, Q174, D177, and Q192. The 'KMSKS' region motif lies at 227 to 231 (KMSAS). A Phosphoserine modification is found at S235. A disordered region spans residues 348-394 (QEASEKGYPVATPQKSKKAKKPKNKGTKYPGATKTNEIATKLEETKL). T359 carries the phosphothreonine modification. Residues 360-378 (PQKSKKAKKPKNKGTKYPG) carry the Nuclear localization signal motif. Positions 362–373 (KSKKAKKPKNKG) are enriched in basic residues.

Belongs to the class-I aminoacyl-tRNA synthetase family. Homodimer. Interacts with KNR4/SMI1.

The protein localises to the cytoplasm. Its subcellular location is the nucleus. The catalysed reaction is tRNA(Tyr) + L-tyrosine + ATP = L-tyrosyl-tRNA(Tyr) + AMP + diphosphate + H(+). With respect to regulation, inhibited by N-ethylmaleimide and p-chloromercuribenzoate. In terms of biological role, catalyzes the attachment of L-tyrosine to tRNA(Tyr) in a two-step reaction: L-tyrosine is first activated by ATP to form Tyr-AMP and then transferred to the acceptor end of tRNA(Tyr). The specificity determinants on tRNA(Tyr) are the base pair C1-G72, the discriminator residue A73, and the three anticodon bases G34, U35 and A36. Also involved in nuclear tRNA export. Also attaches D-Tyr to tRNA(Tyr), this reaction is about 150-fold less efficient than attachment of L-Tyr. The protein is Tyrosine--tRNA ligase, cytoplasmic of Saccharomyces cerevisiae (strain ATCC 204508 / S288c) (Baker's yeast).